We begin with the raw amino-acid sequence, 83 residues long: U-actitoxin-Avd8d (83 aa).

Residues 1–19 form the signal peptide; it reads MASTRLFVLLVIGTVLLCQ. Residues 20 to 38 constitute a propeptide that is removed on maturation; the sequence is VSGFLDELLAEHELPQDMT.

This sequence belongs to the sea anemone 8 toxin family.

The protein localises to the secreted. It is found in the nematocyst. The polypeptide is U-actitoxin-Avd8d (Anemonia viridis (Snakelocks anemone)).